The primary structure comprises 252 residues: UPF0736 protein OB1207 (252 aa).

The protein belongs to the UPF0736 family.

In Oceanobacillus iheyensis (strain DSM 14371 / CIP 107618 / JCM 11309 / KCTC 3954 / HTE831), this protein is UPF0736 protein OB1207.